The sequence spans 124 residues: Glycine cleavage system H protein (124 aa).

Positions 22-104 constitute a Lipoyl-binding domain; sequence LIVTGISDHA…YGKGWIYKMK (83 aa). Lys-63 carries the N6-lipoyllysine modification.

It belongs to the GcvH family. The glycine cleavage system is composed of four proteins: P, T, L and H. It depends on (R)-lipoate as a cofactor.

Functionally, the glycine cleavage system catalyzes the degradation of glycine. The H protein shuttles the methylamine group of glycine from the P protein to the T protein. The protein is Glycine cleavage system H protein of Acinetobacter baylyi (strain ATCC 33305 / BD413 / ADP1).